The chain runs to 2083 residues: Centriole proteome protein 16 (2083 aa).

A disordered region spans residues 205-333; sequence DAPTMDFMPP…PAVPPPLSPS (129 aa). The span at 227-245 shows a compositional bias: low complexity; sequence TAETADTAGAAGRKSLSGA. A compositionally biased stretch (gly residues) spans 246-258; that stretch reads SAGGAGPAKGGAK. 2 stretches are compositionally biased toward low complexity: residues 259–274 and 283–292; these read AGAA…SAGA and GSTAGAATPG. Acidic residues predominate over residues 302–315; sequence GEEDFEDDLSEDLD. A compositionally biased stretch (pro residues) spans 319–331; it reads PLPPSPAVPPPLS. WD repeat units follow at residues 482–523, 526–569, 579–620, 689–726, 728–767, 770–809, 812–853, 856–895, 990–1029, and 1041–1079; these read GHTA…CLAI, AHAS…AAGG, ATEY…GTSV, LHAA…YLLE, EHEG…YTTL, SHCG…QLYE, APGE…LLQE, QHRA…APAQ, VSPL…ALRG, and GHPS…MQQE. Disordered stretches follow at residues 1113–1141 and 1225–1276; these read HTQA…VASA and ALVV…PPPP. Residues 1263 to 1276 show a composition bias toward pro residues; sequence VPLPPSPQPLPPPP. 7 WD repeats span residues 1326–1365, 1403–1444, 1448–1486, 1497–1539, 1651–1691, 1736–1781, and 1785–1824; these read GHNR…RAAQ, YHPL…LVAA, EQSP…LEQR, RDPR…QPPQ, GQAA…AEPA, DPLD…QLSW, and RHPA…LVSY. The tract at residues 1713 to 1743 is disordered; it reads APAHTLRHPPSAAPSSAASSSPLDPLDPLPA. Positions 1720-1743 are enriched in low complexity; the sequence is HPPSAAPSSAASSSPLDPLDPLPA. A disordered region spans residues 1832–1870; sequence GPTPHSPGGTGRRSPRGAASPPPAPPRPGTGPLQAMAVS. Residues 1851 to 1860 show a composition bias toward pro residues; that stretch reads SPPPAPPRPG. The WD 18 repeat unit spans residues 2035 to 2073; the sequence is GHAGAVAAASYTGDGGHAVTASGSVLMVWDAAQLLKGVT.

The protein belongs to the WD repeat WDR90/POC16 family.

It is found in the cytoplasm. The protein resides in the cytoskeleton. The protein localises to the microtubule organizing center. Its subcellular location is the centrosome. It localises to the centriole. Required for flagellum assembly and/or maintenance. This chain is Centriole proteome protein 16, found in Chlamydomonas reinhardtii (Chlamydomonas smithii).